We begin with the raw amino-acid sequence, 346 residues long: GTPase Obg (346 aa).

In terms of domain architecture, Obg spans Met-1–Leu-159. Positions Asn-127 to Glu-149 are disordered. The span at Phe-130–Gln-140 shows a compositional bias: polar residues. The OBG-type G domain maps to Ala-160–Glu-333. GTP contacts are provided by residues Gly-166 to Ser-173, Phe-191 to Tyr-195, Asp-213 to Gly-216, Asn-283 to Asp-286, and Ser-314 to Val-316. Ser-173 and Thr-193 together coordinate Mg(2+).

The protein belongs to the TRAFAC class OBG-HflX-like GTPase superfamily. OBG GTPase family. In terms of assembly, monomer. It depends on Mg(2+) as a cofactor.

The protein resides in the cytoplasm. In terms of biological role, an essential GTPase which binds GTP, GDP and possibly (p)ppGpp with moderate affinity, with high nucleotide exchange rates and a fairly low GTP hydrolysis rate. Plays a role in control of the cell cycle, stress response, ribosome biogenesis and in those bacteria that undergo differentiation, in morphogenesis control. The polypeptide is GTPase Obg (Hydrogenovibrio crunogenus (strain DSM 25203 / XCL-2) (Thiomicrospira crunogena)).